The following is a 127-amino-acid chain: UPF0102 protein NFA_41430 (127 aa).

This sequence belongs to the UPF0102 family.

The protein is UPF0102 protein NFA_41430 of Nocardia farcinica (strain IFM 10152).